A 504-amino-acid polypeptide reads, in one-letter code: Ribonuclease Y (504 aa).

A helical membrane pass occupies residues threonine 2–isoleucine 22. A KH domain is found at threonine 194–valine 279. One can recognise an HD domain in the interval valine 320–alanine 413.

The protein belongs to the RNase Y family.

It is found in the cell membrane. Endoribonuclease that initiates mRNA decay. The chain is Ribonuclease Y from Treponema pallidum (strain Nichols).